The primary structure comprises 794 residues: uncharacterized protein (794 aa).

Residues 1-22 form the signal peptide; it reads MKFKYGAIVFSGLLGVSAILAA. C23 carries N-palmitoyl cysteine lipidation. C23 carries the S-diacylglycerol cysteine lipid modification. 2 stretches are compositionally biased toward polar residues: residues 182–200 and 245–261; these read TSVQRTADSGSGTTNNNGV and QMSTQTQPTDNSNDANQ. 5 disordered regions span residues 182 to 208, 222 to 261, 474 to 529, 566 to 594, and 737 to 757; these read TSVQRTADSGSGTTNNNGVTKPLKIDK, NKAKENGKKTSSSRRKRNLSSSKQMSTQTQPTDNSNDANQ, FKIK…GKNG, SAAKKEDKKSGESTTEQTQIQSKSVTEQK, and KNEKKEGSDQKDSKSNGRGKQ. A compositionally biased stretch (low complexity) spans 475-501; it reads KIKSSNKSKSSSSKSSTKAETGKTSGG. The span at 511 to 526 shows a compositional bias: polar residues; the sequence is GAQNQGKKGEGAQNQG. Residues 567–576 show a composition bias toward basic and acidic residues; the sequence is AAKKEDKKSG. Positions 577–593 are enriched in polar residues; it reads ESTTEQTQIQSKSVTEQ. Basic and acidic residues predominate over residues 737-751; it reads KNEKKEGSDQKDSKS.

Belongs to the MG185/MG260 family.

The protein resides in the cell membrane. This is an uncharacterized protein from Mycoplasma pneumoniae (strain ATCC 29342 / M129 / Subtype 1) (Mycoplasmoides pneumoniae).